The primary structure comprises 289 residues: ATP phosphoribosyltransferase (289 aa).

This sequence belongs to the ATP phosphoribosyltransferase family. Long subfamily. Requires Mg(2+) as cofactor.

Its subcellular location is the cytoplasm. It catalyses the reaction 1-(5-phospho-beta-D-ribosyl)-ATP + diphosphate = 5-phospho-alpha-D-ribose 1-diphosphate + ATP. The protein operates within amino-acid biosynthesis; L-histidine biosynthesis; L-histidine from 5-phospho-alpha-D-ribose 1-diphosphate: step 1/9. Its activity is regulated as follows. Feedback inhibited by histidine. Functionally, catalyzes the condensation of ATP and 5-phosphoribose 1-diphosphate to form N'-(5'-phosphoribosyl)-ATP (PR-ATP). Has a crucial role in the pathway because the rate of histidine biosynthesis seems to be controlled primarily by regulation of HisG enzymatic activity. The protein is ATP phosphoribosyltransferase of Pelotomaculum thermopropionicum (strain DSM 13744 / JCM 10971 / SI).